The following is a 32-amino-acid chain: U3-cyrtautoxin-As1a (32 aa).

3 disulfide bridges follow: C4–C19, C11–C24, and C18–C29.

The protein belongs to the neurotoxin 14 (magi-1) family. This sequence to aptotoxin III. In terms of tissue distribution, expressed by the venom gland.

Its subcellular location is the secreted. Functionally, is both paralytic and lethal, when injected into lepidopteran larvae. Is a slower acting toxin, being lethal at 24 hours, but not paralytic at 1 hour post-injection. The polypeptide is U3-cyrtautoxin-As1a (Apomastus schlingeri (Trap-door spider)).